We begin with the raw amino-acid sequence, 434 residues long: Mitochondrial distribution and morphology protein 12 (434 aa).

Residues 1 to 434 (MSIDIDWERA…VYPSFWTFLV (434 aa)) form the SMP-LTD domain. Residues 70–83 (YEEDDNENFSESSE) show a composition bias toward acidic residues. Disordered regions lie at residues 70 to 141 (YEED…LRSP) and 181 to 277 (TPLG…LPPR). Over residues 86 to 97 (SPTREPVDRYGS) the composition is skewed to basic and acidic residues. Polar residues predominate over residues 215–237 (SAQSRPSTANTGNTLLSRGSMSS).

The protein belongs to the MDM12 family. As to quaternary structure, component of the ER-mitochondria encounter structure (ERMES) or MDM complex, composed of MMM1, MDM10, MDM12 and MDM34. An MMM1 homodimer associates with one molecule of MDM12 on each side in a pairwise head-to-tail manner, and the SMP-LTD domains of MMM1 and MDM12 generate a continuous hydrophobic tunnel for phospholipid trafficking.

It is found in the mitochondrion outer membrane. Its subcellular location is the endoplasmic reticulum membrane. Functionally, component of the ERMES/MDM complex, which serves as a molecular tether to connect the endoplasmic reticulum (ER) and mitochondria. Components of this complex are involved in the control of mitochondrial shape and protein biogenesis, and function in nonvesicular lipid trafficking between the ER and mitochondria. MDM12 is required for the interaction of the ER-resident membrane protein MMM1 and the outer mitochondrial membrane-resident beta-barrel protein MDM10. The MDM12-MMM1 subcomplex functions in the major beta-barrel assembly pathway that is responsible for biogenesis of all mitochondrial outer membrane beta-barrel proteins, and acts in a late step after the SAM complex. The MDM10-MDM12-MMM1 subcomplex further acts in the TOM40-specific pathway after the action of the MDM12-MMM1 complex. Essential for establishing and maintaining the structure of mitochondria and maintenance of mtDNA nucleoids. The protein is Mitochondrial distribution and morphology protein 12 of Ajellomyces dermatitidis (strain ER-3 / ATCC MYA-2586) (Blastomyces dermatitidis).